Reading from the N-terminus, the 38-residue chain is Photosystem II reaction center protein L (38 aa).

A helical membrane pass occupies residues 17-37; sequence SLYWGLLLIFVLAVLFSNYFF.

Belongs to the PsbL family. PSII is composed of 1 copy each of membrane proteins PsbA, PsbB, PsbC, PsbD, PsbE, PsbF, PsbH, PsbI, PsbJ, PsbK, PsbL, PsbM, PsbT, PsbX, PsbY, PsbZ, Psb30/Ycf12, at least 3 peripheral proteins of the oxygen-evolving complex and a large number of cofactors. It forms dimeric complexes.

Its subcellular location is the plastid. It is found in the chloroplast thylakoid membrane. Its function is as follows. One of the components of the core complex of photosystem II (PSII). PSII is a light-driven water:plastoquinone oxidoreductase that uses light energy to abstract electrons from H(2)O, generating O(2) and a proton gradient subsequently used for ATP formation. It consists of a core antenna complex that captures photons, and an electron transfer chain that converts photonic excitation into a charge separation. This subunit is found at the monomer-monomer interface and is required for correct PSII assembly and/or dimerization. The protein is Photosystem II reaction center protein L of Psilotum nudum (Whisk fern).